The sequence spans 376 residues: Methionine import ATP-binding protein MetN 2 (376 aa).

Residues 34-273 (VRFINLGKTY…PQHDVSKTLL (240 aa)) form the ABC transporter domain. An ATP-binding site is contributed by 70–77 (GRSGAGKS).

The protein belongs to the ABC transporter superfamily. Methionine importer (TC 3.A.1.24) family. The complex is composed of two ATP-binding proteins (MetN), two transmembrane proteins (MetI) and a solute-binding protein (MetQ).

Its subcellular location is the cell inner membrane. It catalyses the reaction L-methionine(out) + ATP + H2O = L-methionine(in) + ADP + phosphate + H(+). The catalysed reaction is D-methionine(out) + ATP + H2O = D-methionine(in) + ADP + phosphate + H(+). Its function is as follows. Part of the ABC transporter complex MetNIQ involved in methionine import. Responsible for energy coupling to the transport system. The sequence is that of Methionine import ATP-binding protein MetN 2 from Pseudomonas savastanoi pv. phaseolicola (strain 1448A / Race 6) (Pseudomonas syringae pv. phaseolicola (strain 1448A / Race 6)).